A 318-amino-acid polypeptide reads, in one-letter code: Ornithine carbamoyltransferase (318 aa).

Carbamoyl phosphate-binding positions include 63–66, Gln-90, Arg-114, and 141–144; these read STRT and HPCQ. L-ornithine is bound by residues Asn-172, Asp-235, and 239-240; that span reads SM. Carbamoyl phosphate is bound by residues 275–276 and Arg-303; that span reads CL.

The protein belongs to the aspartate/ornithine carbamoyltransferase superfamily. OTCase family.

The protein localises to the cytoplasm. It carries out the reaction carbamoyl phosphate + L-ornithine = L-citrulline + phosphate + H(+). It functions in the pathway amino-acid biosynthesis; L-arginine biosynthesis; L-arginine from L-ornithine and carbamoyl phosphate: step 1/3. Functionally, reversibly catalyzes the transfer of the carbamoyl group from carbamoyl phosphate (CP) to the N(epsilon) atom of ornithine (ORN) to produce L-citrulline. The polypeptide is Ornithine carbamoyltransferase (Prochlorococcus marinus (strain MIT 9313)).